The primary structure comprises 72 residues: Translation initiation factor IF-1 (72 aa).

The region spanning 1 to 72 (MSKEDSFEME…SKGRITYRAR (72 aa)) is the S1-like domain.

This sequence belongs to the IF-1 family. In terms of assembly, component of the 30S ribosomal translation pre-initiation complex which assembles on the 30S ribosome in the order IF-2 and IF-3, IF-1 and N-formylmethionyl-tRNA(fMet); mRNA recruitment can occur at any time during PIC assembly.

Its subcellular location is the cytoplasm. One of the essential components for the initiation of protein synthesis. Stabilizes the binding of IF-2 and IF-3 on the 30S subunit to which N-formylmethionyl-tRNA(fMet) subsequently binds. Helps modulate mRNA selection, yielding the 30S pre-initiation complex (PIC). Upon addition of the 50S ribosomal subunit IF-1, IF-2 and IF-3 are released leaving the mature 70S translation initiation complex. This is Translation initiation factor IF-1 from Pseudomonas savastanoi pv. phaseolicola (strain 1448A / Race 6) (Pseudomonas syringae pv. phaseolicola (strain 1448A / Race 6)).